The sequence spans 417 residues: Probable medium-chain specific acyl-CoA dehydrogenase 10, mitochondrial (417 aa).

Residues 1-15 constitute a mitochondrion transit peptide; that stretch reads MLSRIATSSLGLSRS. FAD-binding positions include 148-157 and 181-183; these read YCVTEPGAGS and WIT. S157 serves as a coordination point for substrate. Residue 268 to 271 participates in substrate binding; the sequence is DMTR. FAD contacts are provided by residues 306–307 and 364–368; these read HQ and QIFGG. Catalysis depends on E391, which acts as the Proton acceptor. A substrate-binding site is contributed by G392. 393–395 serves as a coordination point for FAD; that stretch reads TSQ.

It belongs to the acyl-CoA dehydrogenase family. Homotetramer. The cofactor is FAD. As to expression, expressed in the epidermis and intestine.

It is found in the mitochondrion matrix. It catalyses the reaction a medium-chain 2,3-saturated fatty acyl-CoA + oxidized [electron-transfer flavoprotein] + H(+) = a medium-chain (2E)-enoyl-CoA + reduced [electron-transfer flavoprotein]. The protein operates within lipid metabolism; mitochondrial fatty acid beta-oxidation. This enzyme is specific for acyl chain lengths of 4 to 16. The chain is Probable medium-chain specific acyl-CoA dehydrogenase 10, mitochondrial (acdh-10) from Caenorhabditis elegans.